Here is a 372-residue protein sequence, read N- to C-terminus: D-alanine--D-alanine ligase (372 aa).

Residues 145-349 enclose the ATP-grasp domain; sequence KTVLRAGGIP…CPNLLDQLIE (205 aa). 176–231 contacts ATP; it reads DRWGTSELFVKAVSLGSSVATLPVKTETEFTKAVKEVFRYDDRLMVEPRIRGREIE. Mg(2+)-binding residues include aspartate 303, glutamate 316, and asparagine 318.

Belongs to the D-alanine--D-alanine ligase family. Requires Mg(2+) as cofactor. Mn(2+) is required as a cofactor.

It localises to the cytoplasm. The enzyme catalyses 2 D-alanine + ATP = D-alanyl-D-alanine + ADP + phosphate + H(+). Its pathway is cell wall biogenesis; peptidoglycan biosynthesis. In terms of biological role, cell wall formation. The protein is D-alanine--D-alanine ligase of Coxiella burnetii (strain CbuK_Q154) (Coxiella burnetii (strain Q154)).